The primary structure comprises 727 residues: Catalase-peroxidase (727 aa).

The disordered stretch occupies residues 1 to 26 (MDTKVETGGKCPVAHGPAGAKGRGNR). Positions 97-219 (WHSAGTYRIT…LGAVQMGLIY (123 aa)) form a cross-link, tryptophyl-tyrosyl-methioninium (Trp-Tyr) (with M-245). The active-site Proton acceptor is the His-98. Residues 219-245 (YVNPEGPNGNPDPIAAARDIRETFSRM) constitute a cross-link (tryptophyl-tyrosyl-methioninium (Tyr-Met) (with W-97)). Heme b is bound at residue His-260.

Belongs to the peroxidase family. Peroxidase/catalase subfamily. As to quaternary structure, homodimer or homotetramer. Heme b serves as cofactor. Formation of the three residue Trp-Tyr-Met cross-link is important for the catalase, but not the peroxidase activity of the enzyme.

The enzyme catalyses H2O2 + AH2 = A + 2 H2O. It carries out the reaction 2 H2O2 = O2 + 2 H2O. Bifunctional enzyme with both catalase and broad-spectrum peroxidase activity. This Allorhizobium ampelinum (strain ATCC BAA-846 / DSM 112012 / S4) (Agrobacterium vitis (strain S4)) protein is Catalase-peroxidase.